The primary structure comprises 660 residues: Probable serine/threonine-protein kinase CE0033 (660 aa).

The region spanning 9–278 (YELGASIGSG…AEMAADLELL (270 aa)) is the Protein kinase domain. Residues 15 to 23 (IGSGGMSEV) and Lys-38 each bind ATP. Catalysis depends on Asp-136, which acts as the Proton acceptor. Positions 288–319 (RAHVEKPDEPETVVVPQRLSTPPPPPTPAMPA) are disordered. PASTA domains lie at 377-443 (SAST…TISS), 444-512 (GREV…TVST), and 513-577 (GPSL…EISN).

It belongs to the protein kinase superfamily. Ser/Thr protein kinase family.

It catalyses the reaction L-seryl-[protein] + ATP = O-phospho-L-seryl-[protein] + ADP + H(+). It carries out the reaction L-threonyl-[protein] + ATP = O-phospho-L-threonyl-[protein] + ADP + H(+). This Corynebacterium efficiens (strain DSM 44549 / YS-314 / AJ 12310 / JCM 11189 / NBRC 100395) protein is Probable serine/threonine-protein kinase CE0033.